Here is a 328-residue protein sequence, read N- to C-terminus: L-lactate dehydrogenase (328 aa).

NAD(+) contacts are provided by residues V18, E39, K46, Y71, and 85–86; that span reads GA. The substrate site is built by Q88 and R94. Residues S107, 124-126, and S149 contribute to the NAD(+) site; that span reads AAN. Position 126-129 (126-129) interacts with substrate; the sequence is NPVD. 154–157 is a binding site for substrate; that stretch reads DTAR. 2 residues coordinate beta-D-fructose 1,6-bisphosphate: R159 and H174. H181 functions as the Proton acceptor in the catalytic mechanism. A Phosphotyrosine modification is found at Y226. T235 contacts substrate.

Belongs to the LDH/MDH superfamily. LDH family. In terms of assembly, homotetramer.

The protein resides in the cytoplasm. The catalysed reaction is (S)-lactate + NAD(+) = pyruvate + NADH + H(+). It functions in the pathway fermentation; pyruvate fermentation to lactate; (S)-lactate from pyruvate: step 1/1. With respect to regulation, allosterically activated by fructose 1,6-bisphosphate (FBP). In terms of biological role, catalyzes the conversion of lactate to pyruvate. The chain is L-lactate dehydrogenase from Streptococcus mutans serotype c (strain ATCC 700610 / UA159).